The primary structure comprises 639 residues: Probable methyltransferase PMT18 (639 aa).

Over 1–19 (MAKENSSHSLAEAKRKRLT) the chain is Cytoplasmic. A helical; Signal-anchor for type II membrane protein membrane pass occupies residues 20-42 (WILCVSGLCILSYVLGSWQTNTV). Positions 41–86 (TVPTSSSEAYSRMGCDETSTTTRAQTTQTQTNPSSDDTSSSLSSSE) are disordered. At 43-639 (PTSSSEAYSR…VKSYWTGPSS (597 aa)) the chain is on the lumenal side. A compositionally biased stretch (low complexity) spans 58-85 (TSTTTRAQTTQTQTNPSSDDTSSSLSSS). 2 N-linked (GlcNAc...) asparagine glycosylation sites follow: Asn104 and Asn427.

Belongs to the methyltransferase superfamily.

The protein resides in the endoplasmic reticulum membrane. In Arabidopsis thaliana (Mouse-ear cress), this protein is Probable methyltransferase PMT18.